A 201-amino-acid polypeptide reads, in one-letter code: Putative ankyrin repeat protein R868 (201 aa).

2 ANK repeats span residues 125–154 and 156–188; these read YENN…NCYF and KAKK…DYNF.

In Acanthamoeba polyphaga (Amoeba), this protein is Putative ankyrin repeat protein R868.